A 325-amino-acid chain; its full sequence is Glycine--tRNA ligase alpha subunit (325 aa).

The protein belongs to the class-II aminoacyl-tRNA synthetase family. In terms of assembly, tetramer of two alpha and two beta subunits.

The protein localises to the cytoplasm. It catalyses the reaction tRNA(Gly) + glycine + ATP = glycyl-tRNA(Gly) + AMP + diphosphate. This is Glycine--tRNA ligase alpha subunit from Ralstonia nicotianae (strain ATCC BAA-1114 / GMI1000) (Ralstonia solanacearum).